A 161-amino-acid chain; its full sequence is SsrA-binding protein (161 aa).

The protein belongs to the SmpB family.

The protein resides in the cytoplasm. Required for rescue of stalled ribosomes mediated by trans-translation. Binds to transfer-messenger RNA (tmRNA), required for stable association of tmRNA with ribosomes. tmRNA and SmpB together mimic tRNA shape, replacing the anticodon stem-loop with SmpB. tmRNA is encoded by the ssrA gene; the 2 termini fold to resemble tRNA(Ala) and it encodes a 'tag peptide', a short internal open reading frame. During trans-translation Ala-aminoacylated tmRNA acts like a tRNA, entering the A-site of stalled ribosomes, displacing the stalled mRNA. The ribosome then switches to translate the ORF on the tmRNA; the nascent peptide is terminated with the 'tag peptide' encoded by the tmRNA and targeted for degradation. The ribosome is freed to recommence translation, which seems to be the essential function of trans-translation. The protein is SsrA-binding protein of Vibrio vulnificus (strain YJ016).